Reading from the N-terminus, the 320-residue chain is Probable arabinan endo-1,5-alpha-L-arabinosidase C (320 aa).

The signal sequence occupies residues 1–16 (MYRSTLLFLFIALVNA). The Proton acceptor role is filled by D31. N-linked (GlcNAc...) asparagine glycans are attached at residues N73, N137, and N191. E199 functions as the Proton donor in the catalytic mechanism.

The protein belongs to the glycosyl hydrolase 43 family.

The protein resides in the secreted. The catalysed reaction is Endohydrolysis of (1-&gt;5)-alpha-arabinofuranosidic linkages in (1-&gt;5)-arabinans.. It functions in the pathway glycan metabolism; L-arabinan degradation. Endo-1,5-alpha-L-arabinanase involved in degradation of pectin. Its preferred substrate is linear 1,5-alpha-L-arabinan. This is Probable arabinan endo-1,5-alpha-L-arabinosidase C (abnC) from Aspergillus terreus (strain NIH 2624 / FGSC A1156).